Reading from the N-terminus, the 242-residue chain is 3-dehydroquinate dehydratase (242 aa).

3-dehydroquinate is bound by residues 39 to 41 (EIR) and arginine 73. The Proton donor/acceptor role is filled by histidine 135. The active-site Schiff-base intermediate with substrate is lysine 162. The 3-dehydroquinate site is built by arginine 203 and glutamine 228.

It belongs to the type-I 3-dehydroquinase family. In terms of assembly, homodimer.

The enzyme catalyses 3-dehydroquinate = 3-dehydroshikimate + H2O. The protein operates within metabolic intermediate biosynthesis; chorismate biosynthesis; chorismate from D-erythrose 4-phosphate and phosphoenolpyruvate: step 3/7. In terms of biological role, involved in the third step of the chorismate pathway, which leads to the biosynthesis of aromatic amino acids. Catalyzes the cis-dehydration of 3-dehydroquinate (DHQ) and introduces the first double bond of the aromatic ring to yield 3-dehydroshikimate. The sequence is that of 3-dehydroquinate dehydratase from Methanosarcina mazei (strain ATCC BAA-159 / DSM 3647 / Goe1 / Go1 / JCM 11833 / OCM 88) (Methanosarcina frisia).